A 263-amino-acid polypeptide reads, in one-letter code: Acetylglutamate kinase (263 aa).

Substrate contacts are provided by residues 48–49 (GG), Arg70, and Asn162.

The protein belongs to the acetylglutamate kinase family. ArgB subfamily.

The protein localises to the cytoplasm. The catalysed reaction is N-acetyl-L-glutamate + ATP = N-acetyl-L-glutamyl 5-phosphate + ADP. The protein operates within amino-acid biosynthesis; L-arginine biosynthesis; N(2)-acetyl-L-ornithine from L-glutamate: step 2/4. Catalyzes the ATP-dependent phosphorylation of N-acetyl-L-glutamate. The protein is Acetylglutamate kinase of Vibrio vulnificus (strain CMCP6).